A 148-amino-acid polypeptide reads, in one-letter code: Macrodomain Ter protein (148 aa).

The protein belongs to the MatP family. In terms of assembly, homodimer.

The protein resides in the cytoplasm. Required for spatial organization of the terminus region of the chromosome (Ter macrodomain) during the cell cycle. Prevents early segregation of duplicated Ter macrodomains during cell division. Binds specifically to matS, which is a 13 bp signature motif repeated within the Ter macrodomain. The chain is Macrodomain Ter protein from Haemophilus influenzae (strain 86-028NP).